Consider the following 790-residue polypeptide: Endonuclease MutS2 (790 aa).

334-341 (GPNTGGKT) contacts ATP. In terms of domain architecture, Smr spans 713 to 788 (LDVRGMTLDD…GDGVTIVELH (76 aa)).

Belongs to the DNA mismatch repair MutS family. MutS2 subfamily. As to quaternary structure, homodimer. Binds to stalled ribosomes, contacting rRNA.

Functionally, endonuclease that is involved in the suppression of homologous recombination and thus may have a key role in the control of bacterial genetic diversity. Acts as a ribosome collision sensor, splitting the ribosome into its 2 subunits. Detects stalled/collided 70S ribosomes which it binds and splits by an ATP-hydrolysis driven conformational change. Acts upstream of the ribosome quality control system (RQC), a ribosome-associated complex that mediates the extraction of incompletely synthesized nascent chains from stalled ribosomes and their subsequent degradation. Probably generates substrates for RQC. The protein is Endonuclease MutS2 of Caldanaerobacter subterraneus subsp. tengcongensis (strain DSM 15242 / JCM 11007 / NBRC 100824 / MB4) (Thermoanaerobacter tengcongensis).